A 30-amino-acid polypeptide reads, in one-letter code: DCLPGWSSHEGHCYKVFNQEMYWADAEKFC.

The C-type lectin domain maps to 1-30 (DCLPGWSSHEGHCYKVFNQEMYWADAEKFC). Cysteine 2 and cysteine 13 are joined by a disulfide.

This sequence belongs to the snaclec family. In terms of assembly, heterodimer of a metalloproteinase subunit and a regulatory subunit comprising two polypeptides disulfide-linked (14 kDa and 17 kDa chains). In terms of tissue distribution, expressed by the venom gland.

It is found in the secreted. Functionally, calcium-dependent prothrombin activator. This protein may activate prothrombin via recognition by the regulatory subunit of the calcium ion bound conformation of its gamma-carboxyglutamic acid (GLA) domain, and the subsequent conversion of prothrombin to active thrombin is catalyzed by the catalytic subunit. In Echis carinatus (Saw-scaled viper), this protein is Snaclec carinactivase-1 regulatory subunit 17 kDa chain.